We begin with the raw amino-acid sequence, 437 residues long: UDP-N-acetylmuramate--L-alanine ligase (437 aa).

108 to 114 (GAHGKTS) lines the ATP pocket.

Belongs to the MurCDEF family.

It localises to the cytoplasm. The catalysed reaction is UDP-N-acetyl-alpha-D-muramate + L-alanine + ATP = UDP-N-acetyl-alpha-D-muramoyl-L-alanine + ADP + phosphate + H(+). Its pathway is cell wall biogenesis; peptidoglycan biosynthesis. Functionally, cell wall formation. The polypeptide is UDP-N-acetylmuramate--L-alanine ligase (Lysinibacillus sphaericus (strain C3-41)).